The sequence spans 320 residues: Probable cell division protein WhiA (320 aa).

The segment at residues 276-310 (TLKELGEMVAGGKISKSGINHRLRKIDEIAERLRA) is a DNA-binding region (H-T-H motif).

It belongs to the WhiA family.

In terms of biological role, involved in cell division and chromosome segregation. This Geobacillus thermodenitrificans (strain NG80-2) protein is Probable cell division protein WhiA.